The following is a 518-amino-acid chain: Calcium and calcium/calmodulin-dependent serine/threonine-protein kinase (518 aa).

A Protein kinase domain is found at 13 to 300 (YEISEILGRG…AQELLSHPWV (288 aa)). ATP-binding positions include 19–27 (LGRGGFSVV) and Lys-44. The Proton acceptor role is filled by Asp-165. Thr-265 carries the phosphothreonine modification. A calmodulin-binding region spans residues 323–336 (ARRKLRAAAIASVW). Residues 344-365 (TKKLRSLVGTYDLKEEEIESLR) are a coiled coil. EF-hand domains lie at 394 to 429 (SLIP…LKNS), 430 to 465 (KGDD…LPEE), and 472 to 507 (TEPG…DSSL). Ca(2+) contacts are provided by Asp-407, Asn-409, Asp-411, Thr-413, Glu-418, Asp-443, Asp-445, Ser-447, Cys-449, Glu-454, Asp-485, Asn-487, Asp-489, Lys-491, and Glu-496.

The protein belongs to the protein kinase superfamily. CAMK Ser/Thr protein kinase family. CaMK subfamily. Interacts with IPD3. Interacts with CIP73. Autophosphorylation stimulated by calcium. Occurs probably by an intermolecular mechanism. As to expression, mainly expressed in roots and nodules. Detected in leaves, stems and cotyledons.

The protein resides in the nucleus. The catalysed reaction is L-seryl-[protein] + ATP = O-phospho-L-seryl-[protein] + ADP + H(+). It carries out the reaction L-threonyl-[protein] + ATP = O-phospho-L-threonyl-[protein] + ADP + H(+). Its activity is regulated as follows. Activated by calcium/calmodulin binding after calcium-induced autophosphorylation. In terms of biological role, calcium- and calmodulin-dependent protein kinase necessary and sufficient for dedifferentiation of root cortical cells into nodule initials. Not required for calcium spiking. Acts as central regulator of the nodule organogenesis program. Required for root hair curling and infection thread (IT) formation upon rhizobial infection, and arbuscule formation during arbuscular mycorrhiza (AM) fungal infection. Phosphorylates the downstream target IPD3, a protein required for root infection by symbiotic rhizobia and AM fungi. Phosphorylates the downstream target CIP73, a protein required for root nodule organogenesis. Mediates the phosphorylation of leghemoglobins (e.g. LB1) to modulate their oxygen O(2) affinity, thus regulating the diffusion of oxygen to the bacteroids in nodules. This Lotus japonicus (Lotus corniculatus var. japonicus) protein is Calcium and calcium/calmodulin-dependent serine/threonine-protein kinase.